The primary structure comprises 340 residues: S-adenosylmethionine:tRNA ribosyltransferase-isomerase (340 aa).

It belongs to the QueA family. In terms of assembly, monomer.

The protein resides in the cytoplasm. It catalyses the reaction 7-aminomethyl-7-carbaguanosine(34) in tRNA + S-adenosyl-L-methionine = epoxyqueuosine(34) in tRNA + adenine + L-methionine + 2 H(+). The protein operates within tRNA modification; tRNA-queuosine biosynthesis. Transfers and isomerizes the ribose moiety from AdoMet to the 7-aminomethyl group of 7-deazaguanine (preQ1-tRNA) to give epoxyqueuosine (oQ-tRNA). This Vesicomyosocius okutanii subsp. Calyptogena okutanii (strain HA) protein is S-adenosylmethionine:tRNA ribosyltransferase-isomerase.